Here is a 275-residue protein sequence, read N- to C-terminus: Beta-lactamase OXA-15 (275 aa).

The first 21 residues, 1–21, serve as a signal peptide directing secretion; sequence MAIRIFAILFSIFSLATFAHA. Ser-72 functions as the Acyl-ester intermediate in the catalytic mechanism. Lys-75 carries the N6-carboxylysine modification. 210 to 212 is a substrate binding site; the sequence is KTG.

It belongs to the class-D beta-lactamase family.

It catalyses the reaction a beta-lactam + H2O = a substituted beta-amino acid. In terms of biological role, hydrolyzes oxacillin, first-generation cephalosporins and ceftazidime. Does not hydrolyze cefotaxime or carbapenems. The chain is Beta-lactamase OXA-15 (bla) from Pseudomonas aeruginosa.